The chain runs to 432 residues: Isocitrate lyase (432 aa).

The segment at 1-24 (MSNVGKPRTAQEIQQDWDTNPRWN) is disordered. Over residues 11–22 (QEIQQDWDTNPR) the composition is skewed to polar residues. Substrate is bound at residue 93–95 (SGW). Position 155 (Asp155) interacts with Mg(2+). Residue Cys193 is the Proton acceptor of the active site. Residues 194–195 (GH), Arg230, 315–319 (NCSPS), and Thr349 contribute to the substrate site.

It belongs to the isocitrate lyase/PEP mutase superfamily. Isocitrate lyase family. In terms of assembly, homotetramer. It depends on Mg(2+) as a cofactor.

It carries out the reaction D-threo-isocitrate = glyoxylate + succinate. It participates in carbohydrate metabolism; glyoxylate cycle; (S)-malate from isocitrate: step 1/2. With respect to regulation, inhibited by 3-phosphoglycerate, 6-phosphogluconate, phosphoenolpyruvate (PEP), fructose 1,6-bisphosphate, glycolate, oxalate, and itaconate. Functionally, involved in the metabolic adaptation in response to environmental changes. Catalyzes the reversible formation of succinate and glyoxylate from isocitrate, a key step of the glyoxylate cycle, which operates as an anaplerotic route for replenishing the tricarboxylic acid cycle during growth on fatty acid substrates. The protein is Isocitrate lyase of Corynebacterium glutamicum (strain ATCC 13032 / DSM 20300 / JCM 1318 / BCRC 11384 / CCUG 27702 / LMG 3730 / NBRC 12168 / NCIMB 10025 / NRRL B-2784 / 534).